The following is a 247-amino-acid chain: Ribonuclease 3 (247 aa).

The RNase III domain maps to 21-149 (LQKLSKKIGI…LVGAIYLDQG (129 aa)). Glu62 is a binding site for Mg(2+). Residue Asp66 is part of the active site. The Mg(2+) site is built by Asn135 and Glu138. The active site involves Glu138. One can recognise a DRBM domain in the interval 176–245 (DYKTQLQEYS…AKELYNRIRK (70 aa)).

It belongs to the ribonuclease III family. Homodimer. It depends on Mg(2+) as a cofactor.

The protein resides in the cytoplasm. It carries out the reaction Endonucleolytic cleavage to 5'-phosphomonoester.. Its function is as follows. Digests double-stranded RNA. Involved in the processing of primary rRNA transcript to yield the immediate precursors to the large and small rRNAs (23S and 16S). Processes some mRNAs, and tRNAs when they are encoded in the rRNA operon. Processes pre-crRNA and tracrRNA of type II CRISPR loci if present in the organism. In Leptospira interrogans serogroup Icterohaemorrhagiae serovar copenhageni (strain Fiocruz L1-130), this protein is Ribonuclease 3.